We begin with the raw amino-acid sequence, 544 residues long: 4-coumarate--CoA ligase 2 (544 aa).

Residues Ser190, Ser191, Gly192, Thr193, Thr194, and Lys198 each contribute to the ATP site. (E)-4-coumaroyl-AMP is bound at residue Tyr240. Lys261 contacts CoA. Positions 263–332 (DIVPFLELIQ…AKFPNAKLGQ (70 aa)) are SBD1. Residues Ala310, Gln332, Gly333, Thr337, and Met345 each contribute to the (E)-4-coumaroyl-AMP site. Residues Gln332, Gly333, and Thr337 each coordinate ATP. The SBD2 stretch occupies residues 333–400 (GYGMTEAGPV…IRGDQIMKGY (68 aa)). Residues Asp421 and Arg436 each coordinate ATP. (E)-4-coumaroyl-AMP contacts are provided by Lys438 and Lys442. Residues Lys444 and Gly445 each contribute to the CoA site. ATP is bound at residue Lys527.

Belongs to the ATP-dependent AMP-binding enzyme family. Mg(2+) serves as cofactor.

It catalyses the reaction (E)-4-coumarate + ATP + CoA = (E)-4-coumaroyl-CoA + AMP + diphosphate. It carries out the reaction (E)-4-coumarate + ATP + H(+) = (E)-4-coumaroyl-AMP + diphosphate. The enzyme catalyses (E)-4-coumaroyl-AMP + CoA = (E)-4-coumaroyl-CoA + AMP + H(+). It functions in the pathway phytoalexin biosynthesis; 3,4',5-trihydroxystilbene biosynthesis; 3,4',5-trihydroxystilbene from trans-4-coumarate: step 1/2. Carboxylate--CoA ligase that may use 4-coumarate as substrate. Follows a two-step reaction mechanism, wherein the carboxylate substrate first undergoes adenylation by ATP, followed by a thioesterification in the presence of CoA to yield the final CoA thioester. This Petroselinum crispum (Parsley) protein is 4-coumarate--CoA ligase 2 (4CL2).